Reading from the N-terminus, the 184-residue chain is Large ribosomal subunit protein uL6 (184 aa).

The protein belongs to the universal ribosomal protein uL6 family. Part of the 50S ribosomal subunit.

This protein binds to the 23S rRNA, and is important in its secondary structure. It is located near the subunit interface in the base of the L7/L12 stalk, and near the tRNA binding site of the peptidyltransferase center. This is Large ribosomal subunit protein uL6 from Thermomicrobium roseum (strain ATCC 27502 / DSM 5159 / P-2).